Reading from the N-terminus, the 284-residue chain is Elongation factor Ts (284 aa).

The tract at residues T80–V83 is involved in Mg(2+) ion dislocation from EF-Tu.

Belongs to the EF-Ts family.

It is found in the cytoplasm. Associates with the EF-Tu.GDP complex and induces the exchange of GDP to GTP. It remains bound to the aminoacyl-tRNA.EF-Tu.GTP complex up to the GTP hydrolysis stage on the ribosome. In Neisseria meningitidis serogroup C (strain 053442), this protein is Elongation factor Ts.